A 500-amino-acid polypeptide reads, in one-letter code: Endothelial lipase (500 aa).

An N-terminal signal peptide occupies residues Met-1–Gly-20. Cys-64 and Cys-77 are disulfide-bonded. Residues Asn-80 and Asn-136 are each glycosylated (N-linked (GlcNAc...) asparagine). Ser-169 acts as the Nucleophile in catalysis. Asp-193 serves as the catalytic Charge relay system. Cysteines 252 and 272 form a disulfide. The active-site Charge relay system is His-274. 2 disulfide bridges follow: Cys-297/Cys-316 and Cys-308/Cys-311. Lys-325 to Lys-337 provides a ligand contact to heparin. The region spanning Tyr-347–Lys-482 is the PLAT domain. Residues Asn-393, Asn-469, and Asn-491 are each glycosylated (N-linked (GlcNAc...) asparagine). Residues Cys-463 and Cys-483 are joined by a disulfide bond.

Belongs to the AB hydrolase superfamily. Lipase family. As to quaternary structure, head to tail homodimer. In terms of tissue distribution, high level of expression in the liver, placenta, lung, thyroid, kidney, testis and in the corpus luteum of the ovary. Expressed also in coronary artery endothelial cells, umbilical vein endothelial cells and in hepatocytes and osteosarcoma cell lines. Not detected in heart, brain and muscle.

The protein resides in the secreted. The catalysed reaction is a triacylglycerol + H2O = a diacylglycerol + a fatty acid + H(+). The enzyme catalyses a 1,2-diacyl-sn-glycero-3-phosphocholine + H2O = a 2-acyl-sn-glycero-3-phosphocholine + a fatty acid + H(+). It carries out the reaction 1,2,3-tri-(9Z-octadecenoyl)-glycerol + H2O = di-(9Z)-octadecenoylglycerol + (9Z)-octadecenoate + H(+). It catalyses the reaction 1,2,3-tributanoylglycerol + H2O = dibutanoylglycerol + butanoate + H(+). The catalysed reaction is 1,2-dihexadecanoyl-sn-glycero-3-phosphocholine + H2O = hexadecanoyl-sn-glycero-3-phosphocholine + hexadecanoate + H(+). Inhibited by serum and NaCl. Exerts both phospholipase and triglyceride lipase activities. More active as a phospholipase than a triglyceride lipase. Hydrolyzes triglycerides, both with short-chain fatty acyl groups (tributyrin) and long-chain fatty acyl groups (triolein) with similar levels of activity toward both types of substrates. Hydrolyzes high density lipoproteins (HDL) more efficiently than other lipoproteins. This Homo sapiens (Human) protein is Endothelial lipase (LIPG).